The following is a 248-amino-acid chain: Granulin (248 aa).

It belongs to the polyhedrin family.

In terms of biological role, component of the virus occlusion bodies, which are large proteinaceous structures, that protect the virus from the outside environment for extended periods until they are ingested by insect larvae. The polypeptide is Granulin (Choristoneura fumiferana (Spruce budworm moth)).